The chain runs to 156 residues: Movement protein P17 (156 aa).

Positions 38–54 (AEDAEEEAIAAQEELEF) are homodimerization. Disordered regions lie at residues 55–80 (PEDE…EVSP) and 106–156 (ASYF…IKRG). The tract at residues 57 to 156 (DEAQARHSCL…RAAPKLIKRG (100 aa)) is RNA-binding. 4 positions are modified to phosphoserine: Ser71, Ser79, Ser137, and Ser140. Residues 144 to 156 (KLRRAAPKLIKRG) show a composition bias toward basic residues.

This sequence belongs to the polerovirus movement protein family. As to quaternary structure, homodimer. In terms of processing, expressed as a nonphosphorylated 20kDa form and a phosphorylated 22kDa form. Phosphorylated by a host PKC-related kinase. Serine phosphorylation is required for plamodesma targeting.

It is found in the host cell junction. Its subcellular location is the host plasmodesma. It localises to the host chloroplast envelope. The protein resides in the host Golgi apparatus. The protein localises to the host mitochondrion outer membrane. Its function is as follows. Together with movement protein P3a, facilitates long-distance movement of virions in host. Transports viral genome to neighboring plant cells directly through plasmosdesmata, without any budding. The movement protein allows efficient cell to cell propagation, by bypassing the host cell wall barrier. Binds ssRNA. The polypeptide is Movement protein P17 (Potato leafroll virus (strain Potato/Canada/Rowhani/1979) (PLrV)).